The following is a 159-amino-acid chain: Sperm acrosome-associated protein 5 (159 aa).

An N-terminal signal peptide occupies residues 1-21 (MKAWGTVVVTLATLMVVTVDA). In terms of domain architecture, C-type lysozyme spans 22-150 (KIYERCELAA…SEWLKGCDMH (129 aa)). 4 disulfides stabilise this stretch: Cys-27–Cys-147, Cys-51–Cys-135, Cys-85–Cys-100, and Cys-96–Cys-114. Glu-56 is a catalytic residue.

The protein belongs to the glycosyl hydrolase 22 family.

The protein resides in the secreted. The enzyme catalyses Hydrolysis of (1-&gt;4)-beta-linkages between N-acetylmuramic acid and N-acetyl-D-glucosamine residues in a peptidoglycan and between N-acetyl-D-glucosamine residues in chitodextrins.. This chain is Sperm acrosome-associated protein 5 (SPACA5), found in Homo sapiens (Human).